The sequence spans 315 residues: Small ribosomal subunit biogenesis GTPase RsgA (315 aa).

Residues 82–246 (DQFKSKVLAA…LIDSPGFQEF (165 aa)) enclose the CP-type G domain. GTP-binding positions include 130–133 (NKID) and 184–192 (GQSGMGKSS). Positions 270, 275, 277, and 283 each coordinate Zn(2+).

Belongs to the TRAFAC class YlqF/YawG GTPase family. RsgA subfamily. In terms of assembly, monomer. Associates with 30S ribosomal subunit, binds 16S rRNA. Zn(2+) is required as a cofactor.

It localises to the cytoplasm. Functionally, one of several proteins that assist in the late maturation steps of the functional core of the 30S ribosomal subunit. Helps release RbfA from mature subunits. May play a role in the assembly of ribosomal proteins into the subunit. Circularly permuted GTPase that catalyzes slow GTP hydrolysis, GTPase activity is stimulated by the 30S ribosomal subunit. In Ralstonia pickettii (strain 12J), this protein is Small ribosomal subunit biogenesis GTPase RsgA.